An 874-amino-acid chain; its full sequence is MKLGAWVAAQLPTTRTAVRTRLTRLVVSIVAGLLLYASFPPRNCWWAAVVALALLAWVLTHRATTPVGGLGYGLLFGLVFYVSLLPWIGELVGPGPWLALATTCALFPGIFGLFAVVVRLLPGWPIWFAVGWAAQEWLKSILPFGGFPWGSVAFGQAEGPLLPLVQLGGVALLSTGVALVGCGLTAIALEIEKWWRTGGQGDAPPAVVLPAACICLVLFAAIVVWPQVRHAGSGSGGEPTVTVAVVQGNVPRLGLDFNAQRRAVLDNHVEETLRLAADVHAGLAQQPQFVIWPENSSDIDPFVNPDAGQRISAAAEAIGAPILIGTLMDVPGRPRENPEWTNTAIVWNPGTGPADRHDKAIVQPFGEYLPMPWLFRHLSGYADRAGHFVPGNGTGVVRIAGVPVGVATCWEVIFDRAPRKSILGGAQLLTVPSNNATFNKTMSEQQLAFAKVRAVEHDRYVVVAGTTGISAVIAPDGGELIRTDFFQPAYLDSQVRLKTRLTPATRWGPILQWILVGAAAAVVLVAMRQNGWFPRPRRSEPKGENDDSDAPPGRSEASGPPALSESDDELIQPEQGGRHSSGFGRHRATSRSYMTTGQPAPPAPGNRPSQRVLVIIPTFNERENLPVIHRRLTQACPAVHVLVVDDSSPDGTGQLADELAQADPGRTHVMHRTAKNGLGAAYLAGFAWGLSREYSVLVEMDADGSHAPEQLQRLLDAVDAGADLAIGSRYVAGGTVRNWPWRRLVLSKTANTYSRLALGIGIHDITAGYRAYRREALEAIDLDGVDSKGYCFQIDLTWRTVSNGFVVTEVPITFTERELGVSKMSGSNIREALVKVARWGIEGRLSRSDHARARPDIARPGAGGSRVSRADVTE.

Residues 1-593 (MKLGAWVAAQ…GRHRATSRSY (593 aa)) are apolipoprotein N-acyltransferase. 5 consecutive transmembrane segments (helical) span residues 23–42 (TRLV…FPPR), 72–89 (YGLL…PWIG), 94–115 (PGPW…GLFA), 177–194 (VALV…IEKW), and 206–223 (AVVL…AAIV). The 257-residue stretch at 241 to 497 (VTVAVVQGNV…PAYLDSQVRL (257 aa)) folds into the CN hydrolase domain. Glu294 (proton acceptor) is an active-site residue. Lys359 is a catalytic residue. Cys409 acts as the Nucleophile in catalysis. A helical membrane pass occupies residues 509 to 526 (PILQWILVGAAAAVVLVA). Disordered stretches follow at residues 533 to 609 (FPRP…NRPS) and 852 to 874 (RARP…DVTE). Positions 594 to 874 (MTTGQPAPPA…SRVSRADVTE (281 aa)) are polyprenol monophosphomannose synthase.

This sequence in the N-terminal section; belongs to the CN hydrolase family. Apolipoprotein N-acyltransferase subfamily. In the C-terminal section; belongs to the glycosyltransferase 2 family.

The protein localises to the cell membrane. The enzyme catalyses N-terminal S-1,2-diacyl-sn-glyceryl-L-cysteinyl-[lipoprotein] + a glycerophospholipid = N-acyl-S-1,2-diacyl-sn-glyceryl-L-cysteinyl-[lipoprotein] + a 2-acyl-sn-glycero-3-phospholipid + H(+). It catalyses the reaction a di-trans,poly-cis-dolichyl phosphate + GDP-alpha-D-mannose = a di-trans,poly-cis-dolichyl beta-D-mannosyl phosphate + GDP. Its pathway is protein modification; lipoprotein biosynthesis (N-acyl transfer). Catalyzes the phospholipid dependent N-acylation of the N-terminal cysteine of apolipoprotein, the last step in lipoprotein maturation. Its function is as follows. Transfers mannose from GDP-mannose to lipid acceptors to form polyprenol monophosphomannose (PPM). PMM is an alkai-stable sugar donor which adds mannose-phosphate residues to triacylated-phosphatidyl-myo-inositol mannosides (PIM2), eventually leading to generation of the cell wall glycolipid lipoglycan modulins lipoarabinomannan (LAM) and lipomannan (LM). The sequence is that of Bifunctional apolipoprotein N-acyltransferase/polyprenol monophosphomannose synthase from Mycobacterium bovis (strain BCG / Pasteur 1173P2).